A 531-amino-acid polypeptide reads, in one-letter code: Peptide chain release factor 3 (531 aa).

The region spanning 13–282 (SKRRTFAIIS…GLTQWAPSPM (270 aa)) is the tr-type G domain. GTP contacts are provided by residues 22–29 (SHPDAGKT), 90–94 (DTPGH), and 144–147 (NKLD).

Belongs to the TRAFAC class translation factor GTPase superfamily. Classic translation factor GTPase family. PrfC subfamily.

It is found in the cytoplasm. Its function is as follows. Increases the formation of ribosomal termination complexes and stimulates activities of RF-1 and RF-2. It binds guanine nucleotides and has strong preference for UGA stop codons. It may interact directly with the ribosome. The stimulation of RF-1 and RF-2 is significantly reduced by GTP and GDP, but not by GMP. This Vibrio cholerae serotype O1 (strain ATCC 39315 / El Tor Inaba N16961) protein is Peptide chain release factor 3.